The primary structure comprises 334 residues: Fructose-1,6-bisphosphatase class 1 (334 aa).

Mg(2+)-binding residues include E87, D106, L108, and D109. Substrate is bound by residues 109-112 (DGSS), N208, and K274. Residue E280 coordinates Mg(2+).

Belongs to the FBPase class 1 family. Homotetramer. Mg(2+) is required as a cofactor.

It localises to the cytoplasm. It carries out the reaction beta-D-fructose 1,6-bisphosphate + H2O = beta-D-fructose 6-phosphate + phosphate. Its pathway is carbohydrate biosynthesis; gluconeogenesis. The polypeptide is Fructose-1,6-bisphosphatase class 1 (Psychrobacter sp. (strain PRwf-1)).